A 1003-amino-acid chain; its full sequence is Helicase MOV-10 (1003 aa).

Lys148 is modified (N6-acetyllysine). 2 positions are modified to phosphothreonine: Thr160 and Thr254. Ser432 carries the post-translational modification Phosphoserine. 524 to 531 provides a ligand contact to ATP; sequence GPPGTGKT. The DEAG box signature appears at 645 to 648; the sequence is DEAG. The interval 921–965 is interaction with AGO2 and APOBEC3G; it reads NPLLLGHDPDWKVFLEFCKENGGYTGCPFPAKLDLQQGQNLLQGL. Residues 966-1003 are disordered; the sequence is SKLSPSTSGPHSHDYLPQEREGEGGLSLQVEPEWRNEL. Ser969 and Ser977 each carry phosphoserine. A compositionally biased stretch (basic and acidic residues) spans 976 to 988; it reads HSHDYLPQEREGE.

Belongs to the DNA2/NAM7 helicase family. SDE3 subfamily. Interacts with DICER1, AGO2, TARBP2, EIF6 and RPL7A (60S ribosome subunit); they form a large RNA-induced silencing complex (RISC). Interacts with APOBEC3G in an RNA-dependent manner. Interacts with TRIM71 (via NHL repeats) in an RNA-dependent manner. Interacts with both protein products of LIRE1, ORF1p and ORF2p. Interacts with TUT4 and, to a lesser extent, TUT7; the interactions are RNA-dependent. Interacts with AGO2, TNRC6B and UPF1; the interactions are direct and RNA-dependent. Interacts with FMR1; this interaction is direct, occurs in an RNA-dependent manner on polysomes and induces association of MOV10 with RNAs. Interacts with SHFL; the interaction increases in presence of RNA. Interacts with DHX34; the interaction is RNA-independent. Interacts with IKBKE. Interacts with RBM46. As to quaternary structure, (Microbial infection) Interacts with the human hepatitis delta virus (HDV) antigen HDAg. In terms of assembly, (Microbial infection) Interacts with HIV-1 protein GAG. Ubiquitinated by the DCX(DCAF12) complex that specifically recognizes the glutamate-leucine (Glu-Leu) degron at the C-terminus, leading to its degradation. Post-translationally, (Microbial infection) Cleaved and targeted for degradation by picornavirus proteases.

Its subcellular location is the cytoplasm. It localises to the P-body. The protein resides in the cytoplasmic ribonucleoprotein granule. It is found in the stress granule. The protein localises to the nucleus. The enzyme catalyses ATP + H2O = ADP + phosphate + H(+). 5' to 3' RNA helicase that is involved in a number of cellular roles ranging from mRNA metabolism and translation, modulation of viral infectivity, inhibition of retrotransposition, or regulation of synaptic transmission. Plays an important role in innate antiviral immunity by promoting type I interferon production. Mechanistically, specifically uses IKKepsilon/IKBKE as the mediator kinase for IRF3 activation. Blocks HIV-1 virus replication at a post-entry step. Counteracts HIV-1 Vif-mediated degradation of APOBEC3G through its helicase activity by interfering with the ubiquitin-proteasome pathway. Also inhibits hepatitis B virus/HBV replication by interacting with HBV RNA and thereby inhibiting the early step of viral reverse transcription. Contributes to UPF1 mRNA target degradation by translocation along 3' UTRs. Required for microRNA (miRNA)-mediated gene silencing by the RNA-induced silencing complex (RISC). Required for both miRNA-mediated translational repression and miRNA-mediated cleavage of complementary mRNAs by RISC. In cooperation with FMR1, regulates miRNA-mediated translational repression by AGO2. Restricts retrotransposition of long interspersed element-1 (LINE-1) in cooperation with TUT4 and TUT7 counteracting the RNA chaperonne activity of L1RE1. Facilitates LINE-1 uridylation by TUT4 and TUT7. Required for embryonic viability and for normal central nervous system development and function. Plays two critical roles in early brain development: suppresses retroelements in the nucleus by directly inhibiting cDNA synthesis, while regulates cytoskeletal mRNAs to influence neurite outgrowth in the cytosol. May function as a messenger ribonucleoprotein (mRNP) clearance factor. Its function is as follows. (Microbial infection) Required for RNA-directed transcription and replication of the human hepatitis delta virus (HDV). Interacts with small capped HDV RNAs derived from genomic hairpin structures that mark the initiation sites of RNA-dependent HDV RNA transcription. This Homo sapiens (Human) protein is Helicase MOV-10.